A 207-amino-acid chain; its full sequence is Large ribosomal subunit protein uL4 (207 aa).

The segment at 49–78 is disordered; sequence HAVKNRSAVRGGGRKPWRQKGTGRARQGSI. Residues 60 to 71 show a composition bias toward basic residues; that stretch reads GGRKPWRQKGTG.

The protein belongs to the universal ribosomal protein uL4 family. In terms of assembly, part of the 50S ribosomal subunit.

Functionally, one of the primary rRNA binding proteins, this protein initially binds near the 5'-end of the 23S rRNA. It is important during the early stages of 50S assembly. It makes multiple contacts with different domains of the 23S rRNA in the assembled 50S subunit and ribosome. In terms of biological role, forms part of the polypeptide exit tunnel. This chain is Large ribosomal subunit protein uL4, found in Enterococcus faecalis (strain ATCC 700802 / V583).